The chain runs to 742 residues: Photosystem I P700 chlorophyll a apoprotein A2 (742 aa).

8 consecutive transmembrane segments (helical) span residues 46 to 69 (LFST…FHIA), 135 to 158 (LFQA…LHLQ), 175 to 199 (LNHH…HVAI), 273 to 291 (IAHH…GHMY), 336 to 359 (LHFQ…QHMG), 375 to 401 (SALY…IFFV), 423 to 445 (ALIS…IYVH), and 525 to 543 (FLVH…LILI). [4Fe-4S] cluster is bound by residues cysteine 567 and cysteine 576. 2 helical membrane passes run 583 to 604 (AMYL…YWHW) and 651 to 673 (LSVW…MFLI). Histidine 662, methionine 670, and tyrosine 678 together coordinate divinyl chlorophyll a. A phylloquinone-binding site is contributed by tryptophan 679. A helical transmembrane segment spans residues 715 to 735 (LVGLAHFTIGNILTFGAFVIA).

This sequence belongs to the PsaA/PsaB family. As to quaternary structure, the PsaA/B heterodimer binds the P700 divinyl chlorophyll special pair and subsequent electron acceptors. PSI consists of a core antenna complex that captures photons, and an electron transfer chain that converts photonic excitation into a charge separation. The cyanobacterial PSI reaction center is composed of one copy each of PsaA,B,C,D,E,F,I,J,K,L,M and X, and forms trimeric complexes. Requires PSI electron transfer chain: 5 divinyl chlorophyll a, 1 divinyl chlorophyll a', 2 phylloquinones and 3 4Fe-4S clusters. PSI core antenna: 90 divinyl chlorophyll a, 22 carotenoids, 3 phospholipids and 1 galactolipid. P700 is a divinyl chlorophyll a/divinyl chlorophyll a' dimer, A0 is one or more divinyl chlorophyll a, A1 is one or both phylloquinones and FX is a shared 4Fe-4S iron-sulfur center. as cofactor.

It localises to the cellular thylakoid membrane. It catalyses the reaction reduced [plastocyanin] + hnu + oxidized [2Fe-2S]-[ferredoxin] = oxidized [plastocyanin] + reduced [2Fe-2S]-[ferredoxin]. Functionally, psaA and PsaB bind P700, the primary electron donor of photosystem I (PSI), as well as the electron acceptors A0, A1 and FX. PSI is a plastocyanin/cytochrome c6-ferredoxin oxidoreductase, converting photonic excitation into a charge separation, which transfers an electron from the donor P700 chlorophyll pair to the spectroscopically characterized acceptors A0, A1, FX, FA and FB in turn. Oxidized P700 is reduced on the lumenal side of the thylakoid membrane by plastocyanin or cytochrome c6. The polypeptide is Photosystem I P700 chlorophyll a apoprotein A2 (Prochlorococcus marinus subsp. pastoris (strain CCMP1986 / NIES-2087 / MED4)).